Reading from the N-terminus, the 140-residue chain is Pre-mRNA-splicing factor NTC20 (140 aa).

The residue at position 139 (serine 139) is a Phosphoserine.

Belongs to the NTC complex (or PRP19-associated complex), composed of at least CEF1, CLF1, ISY1, NTC20, SNT309, SYF1, SYF2, and PRP19. The NTC complex associates with the spliceosome after the release of the U1 and U4 snRNAs and forms the CWC spliceosome subcomplex (or CEF1-associated complex) reminiscent of a late-stage spliceosome composed also of the U2, U5 and U6 snRNAs and at least BUD13, BRR2, CDC40, CUS1, CWC2, CWC15, CWC21, CWC22, CWC23, CWC24, CWC25, CWC27, ECM2, HSH155, IST3, LEA1, MSL1, PRP8, PRP9, PRP11, PRP21, PRP22, PRP45, PRP46, SLU7, SMB1, SMD1, SMD2, SMD3, SMX2, SMX3, SNU114, SPP2, RSE1 and YJU2. Interacts with CEF1, CLF1, ISY1, PRP46, and SYF1.

The protein localises to the nucleus. Functionally, involved in pre-mRNA splicing. As a component of the NTC complex, associates to the spliceosome to mediate conformational rearrangement or to stabilize the structure of the spliceosome after U4 snRNA dissociation, which leads to spliceosome maturation. The protein is Pre-mRNA-splicing factor NTC20 (NTC20) of Saccharomyces cerevisiae (strain ATCC 204508 / S288c) (Baker's yeast).